Reading from the N-terminus, the 216-residue chain is Ion-translocating oxidoreductase complex subunit G (216 aa).

A helical transmembrane segment spans residues 14–34 (ALVLGSFGFLAASFVSIIYVI). Thr181 is modified (FMN phosphoryl threonine).

Belongs to the RnfG family. The complex is composed of six subunits: RnfA, RnfB, RnfC, RnfD, RnfE and RnfG. Requires FMN as cofactor.

The protein localises to the cell inner membrane. Its function is as follows. Part of a membrane-bound complex that couples electron transfer with translocation of ions across the membrane. The chain is Ion-translocating oxidoreductase complex subunit G from Buchnera aphidicola subsp. Baizongia pistaciae (strain Bp).